The chain runs to 83 residues: Protein WFDC9 (83 aa).

A signal peptide spans 1–24 (MKPWIIVLTVSAHGILVFLHVLGS).

Its subcellular location is the secreted. This is Protein WFDC9 (Wfdc9) from Mus musculus (Mouse).